Reading from the N-terminus, the 411-residue chain is Tubulin beta-2 chain (411 aa).

Positions 37, 106, 110, 111, 112, 172, and 194 each coordinate GTP. Position 37 (Glu-37) interacts with Mg(2+). Residues Gln-392–Ala-411 form a disordered region. Residues Gly-402–Ala-411 show a composition bias toward acidic residues.

It belongs to the tubulin family. In terms of assembly, dimer of alpha and beta chains. A typical microtubule is a hollow water-filled tube with an outer diameter of 25 nm and an inner diameter of 15 nM. Alpha-beta heterodimers associate head-to-tail to form protofilaments running lengthwise along the microtubule wall with the beta-tubulin subunit facing the microtubule plus end conferring a structural polarity. Microtubules usually have 13 protofilaments but different protofilament numbers can be found in some organisms and specialized cells. Requires Mg(2+) as cofactor.

It is found in the cytoplasm. The protein localises to the cytoskeleton. Tubulin is the major constituent of microtubules, a cylinder consisting of laterally associated linear protofilaments composed of alpha- and beta-tubulin heterodimers. Microtubules grow by the addition of GTP-tubulin dimers to the microtubule end, where a stabilizing cap forms. Below the cap, tubulin dimers are in GDP-bound state, owing to GTPase activity of alpha-tubulin. The sequence is that of Tubulin beta-2 chain (TUBB2) from Anemia phyllitidis (Fern).